The sequence spans 662 residues: Polyadenylate-binding protein 4 (662 aa).

The tract at residues Met-1–Ala-23 is disordered. 4 RRM domains span residues Cys-46–Arg-124, Gly-134–Arg-211, Thr-225–Lys-302, and Leu-328–Arg-405. 2 stretches are compositionally biased toward low complexity: residues Pro-480–Pro-489 and Gln-506–Pro-518. Disordered stretches follow at residues Pro-480–Pro-518 and Asn-634–Leu-662. Residues Ser-558–Gln-635 enclose the PABC domain. Residues Asn-634–Pro-649 are compositionally biased toward polar residues.

The protein belongs to the polyadenylate-binding protein type-1 family. Interacts with ERD15/CID1. Interacts with Turnip mosaic virus (TuMV) VPg-Pro.

It is found in the cytoplasm. The protein resides in the nucleus. In terms of biological role, binds the poly(A) tail of mRNA. Appears to be an important mediator of the multiple roles of the poly(A) tail in mRNA biogenesis, stability and translation. During infection with potyvirus TuMV, acts as a potential integral component of the viral replicase complex that could play an important role in the regulation of potyviral RNA-dependent RNA polymerase (RdRp). In Arabidopsis thaliana (Mouse-ear cress), this protein is Polyadenylate-binding protein 4 (PAB4).